Reading from the N-terminus, the 575-residue chain is Alpha-(1,6)-fucosyltransferase (575 aa).

At 1–9 (MRAWTGSWR) the chain is on the cytoplasmic side. The helical; Signal-anchor for type II membrane protein transmembrane segment at 10–30 (WIMLILFAWGTLLFYIGGHLV) threads the bilayer. At 31–575 (RDNDHPDHSS…KYPTYPEAEK (545 aa)) the chain is on the lumenal side. 3 disulfides stabilise this stretch: Cys-204–Cys-266, Cys-212–Cys-230, and Cys-218–Cys-222. In terms of domain architecture, GT23 spans 206–493 (KARKLVCNIN…PDASANFHSL (288 aa)). Ser-278 is modified (phosphoserine). The short motif at 299-305 (PRPPYLP) is the SH3-binding element. The important for donor substrate binding stretch occupies residues 365 to 366 (RR). Cys-465 and Cys-472 form a disulfide bridge. The SH3 domain maps to 502–563 (QNAHNQIAVY…PSYKVREKIE (62 aa)).

It belongs to the glycosyltransferase 23 family. In terms of processing, tyrosine phosphorylated by PKDCC/VLK.

The protein localises to the golgi apparatus. The protein resides in the golgi stack membrane. The catalysed reaction is N(4)-{beta-D-GlcNAc-(1-&gt;2)-alpha-D-Man-(1-&gt;3)-[beta-D-GlcNAc-(1-&gt;2)-alpha-D-Man-(1-&gt;6)]-beta-D-Man-(1-&gt;4)-beta-D-GlcNAc-(1-&gt;4)-beta-D-GlcNAc}-L-asparaginyl-[protein] + GDP-beta-L-fucose = an N(4)-{beta-D-GlcNAc-(1-&gt;2)-alpha-D-Man-(1-&gt;3)-[beta-D-GlcNAc-(1-&gt;2)-alpha-D-Man-(1-&gt;6)]-beta-D-Man-(1-&gt;4)-beta-D-GlcNAc-(1-&gt;4)-[alpha-L-Fuc-(1-&gt;6)]-beta-D-GlcNAc}-L-asparaginyl-[protein] + GDP + H(+). Its pathway is protein modification; protein glycosylation. Catalyzes the addition of fucose in alpha 1-6 linkage to the first GlcNAc residue, next to the peptide chains in N-glycans. The sequence is that of Alpha-(1,6)-fucosyltransferase (Fut8) from Rattus norvegicus (Rat).